A 125-amino-acid chain; its full sequence is Lymphocyte antigen 6 complex locus protein G6c (125 aa).

An N-terminal signal peptide occupies residues 1-18 (MRALLLLSLSALLCWVSA). The UPAR/Ly6 domain occupies 20-111 (IRCHSCYKLP…PRPTPALTLV (92 aa)). 3 cysteine pairs are disulfide-bonded: C22–C47, C25–C33, and C39–C65. The N-linked (GlcNAc...) asparagine glycan is linked to N88. Cysteines 92 and 97 form a disulfide. S99 carries GPI-anchor amidated serine lipidation. Residues 100 to 125 (PAPRPTPALTLVFLTSLAGLGLWLLH) constitute a propeptide, removed in mature form.

Post-translationally, N-glycosylated.

Its subcellular location is the cell membrane. The chain is Lymphocyte antigen 6 complex locus protein G6c (LY6G6C) from Bos taurus (Bovine).